A 141-amino-acid polypeptide reads, in one-letter code: UPF0225 protein Rmet_0111 (141 aa).

The protein belongs to the UPF0225 family.

The protein is UPF0225 protein Rmet_0111 of Cupriavidus metallidurans (strain ATCC 43123 / DSM 2839 / NBRC 102507 / CH34) (Ralstonia metallidurans).